The sequence spans 1061 residues: Calcium-transporting ATPase 4, endoplasmic reticulum-type (1061 aa).

The segment at 1–21 (MGKGGEDCGNKQTNSSELVKS) is disordered. At 1–70 (MGKGGEDCGN…NELEKPEGTS (70 aa)) the chain is on the cytoplasmic side. A helical membrane pass occupies residues 71–91 (IFKLILEQFNDTLVRILLAAA). The Lumenal segment spans residues 92–115 (VISFVLAFFDGDEGGEMGITAFVE). The chain crosses the membrane as a helical span at residues 116–135 (PLVIFLILIVNAIVGIWQET). Residues 136 to 278 (NAEKALEALK…EEDTPLKKKL (143 aa)) lie on the Cytoplasmic side of the membrane. A helical transmembrane segment spans residues 279–298 (NEFGEVLTMIIGLICALVWL). Residues 299–327 (INVKYFLSWEYVDGWPRNFKFSFEKCTYY) lie on the Lumenal side of the membrane. The chain crosses the membrane as a helical span at residues 328–345 (FEIAVALAVAAIPEGLPA). 4 residues coordinate Ca(2+): Val336, Ala337, Ile339, and Glu341. Residues 346–786 (VITTCLALGT…GEGRSIYNNM (441 aa)) lie on the Cytoplasmic side of the membrane. Asp383 acts as the 4-aspartylphosphate intermediate in catalysis. Mg(2+) contacts are provided by Asp731 and Asp735. A helical membrane pass occupies residues 787 to 806 (KAFIRYMISSNIGEVASIFL). Ca(2+) is bound by residues Asn797 and Glu800. Topologically, residues 807–816 (TAALGIPEGM) are lumenal. A helical membrane pass occupies residues 817–837 (IPVQLLWVNLVTDGPPATALG). Ca(2+)-binding residues include Asn825, Thr828, and Asp829. The Cytoplasmic portion of the chain corresponds to 838 to 857 (FNPPDKDIMKKPPRRSDDSL). The helical transmembrane segment at 858–880 (ITAWILFRYMVIGLYVGVATVGV) threads the bilayer. Over 881-950 (FIIWYTHNSF…YFQQGKIKAS (70 aa)) the chain is Lumenal. The chain crosses the membrane as a helical span at residues 951–970 (TLSLSVLVAIEMFNSLNALS). Glu961 contributes to the Ca(2+) binding site. Residues 971 to 983 (EDGSLVTMPPWVN) lie on the Cytoplasmic side of the membrane. The chain crosses the membrane as a helical span at residues 984–1002 (PWLLLAMAVSFGLHFVILY). At 1003–1017 (VPFLAQVFGIVPLSL) the chain is on the lumenal side. Residues 1018–1038 (NEWLLVLAVSLPVILIDEVLK) traverse the membrane as a helical segment. At 1039-1061 (FVGRCTSGYRYSPRTPSAKQKEE) the chain is on the cytoplasmic side.

The protein belongs to the cation transport ATPase (P-type) (TC 3.A.3) family. Type IIA subfamily.

It is found in the membrane. The enzyme catalyses Ca(2+)(in) + ATP + H2O = Ca(2+)(out) + ADP + phosphate + H(+). In terms of biological role, this magnesium-dependent enzyme catalyzes the hydrolysis of ATP coupled with the translocation of calcium from the cytosol to an endomembrane compartment. This is Calcium-transporting ATPase 4, endoplasmic reticulum-type (ECA4) from Arabidopsis thaliana (Mouse-ear cress).